Here is a 558-residue protein sequence, read N- to C-terminus: Putative transposase for insertion sequence IS1162 (558 aa).

Residues 11–93 (IKECLRLKFE…PDLITIHREL (83 aa)) enclose the HTH IS408-type domain. Residues 23-44 (LSHEKIARALQLSKGVVSKYVT) constitute a DNA-binding region (H-T-H motif). The region spanning 139–336 (QQHRAGEKLF…HPYEVVTFKR (198 aa)) is the Integrase catalytic domain. Residues 486-558 (QGLDQQPLPK…AAGQPQPELR (73 aa)) form a disordered region.

This sequence belongs to the transposase IS21/IS408/IS1162 family.

Required for the transposition of the insertion element. This chain is Putative transposase for insertion sequence IS1162, found in Pseudomonas fluorescens.